The chain runs to 74 residues: Small ribosomal subunit protein bS18 (74 aa).

The protein belongs to the bacterial ribosomal protein bS18 family. Part of the 30S ribosomal subunit. Forms a tight heterodimer with protein bS6.

In terms of biological role, binds as a heterodimer with protein bS6 to the central domain of the 16S rRNA, where it helps stabilize the platform of the 30S subunit. The chain is Small ribosomal subunit protein bS18 from Chlorobaculum tepidum (strain ATCC 49652 / DSM 12025 / NBRC 103806 / TLS) (Chlorobium tepidum).